The primary structure comprises 218 residues: uncharacterized protein (218 aa).

The region spanning 2-216 (IEVLNLTKKI…ETSEKVIYKK (215 aa)) is the ABC transporter domain. 34–41 (GSNGSGKT) is a binding site for ATP.

The protein belongs to the ABC transporter superfamily.

This is an uncharacterized protein from Bacillus subtilis (strain 168).